The chain runs to 109 residues: Cell division protein ZapA (109 aa).

Positions proline 21–arginine 99 form a coiled coil.

This sequence belongs to the ZapA family. Type 1 subfamily. In terms of assembly, homodimer. Interacts with FtsZ.

It is found in the cytoplasm. In terms of biological role, activator of cell division through the inhibition of FtsZ GTPase activity, therefore promoting FtsZ assembly into bundles of protofilaments necessary for the formation of the division Z ring. It is recruited early at mid-cell but it is not essential for cell division. This Klebsiella pneumoniae (strain 342) protein is Cell division protein ZapA.